The chain runs to 162 residues: Caveolin-2 (162 aa).

Over 1 to 86 (MGLETEKADV…FEMSKYVIYK (86 aa)) the chain is Cytoplasmic. At tyrosine 19 the chain carries Phosphotyrosine; by SRC. Phosphoserine is present on residues serine 20 and serine 23. Tyrosine 27 carries the phosphotyrosine; by SRC modification. Positions 87 to 107 (FLTVFLAIPLAFAAGILFATL) form an intramembrane region, helical. Over 108–162 (SCLHIWIIMPFVKTCLMVLPSVQTIWKSVTDVVIAPLCTSVGRSFSSVSLQLSHD) the chain is Cytoplasmic.

The protein belongs to the caveolin family. As to quaternary structure, monomer or homodimer. Interacts with CAV1; the interaction forms a stable heterooligomeric complex that is required for targeting to lipid rafts and for caveolae formation. Tyrosine phosphorylated forms do not form heterooligomers with the Tyr-19-phosphorylated form existing as a monomer or dimer, and the Tyr-27-form as a monomer only. Interacts (tyrosine phosphorylated form) with the SH2 domain-containing proteins, RASA1, NCK1 and SRC. Interacts (tyrosine phosphorylated form) with INSR, the interaction (Tyr-27-phosphorylated form) is increased on insulin stimulation. Interacts (Tyr-19 phosphorylated form) with MAPK1 (phosphorylated form); the interaction, promoted by insulin, leads to nuclear location and MAPK1 activation. Interacts with STAT3; the interaction is increased on insulin-induced tyrosine phosphorylation leading to STAT activation. Phosphorylated on serine and tyrosine residues. CAV1 promotes phosphorylation on Ser-23 which then targets the complex to the plasma membrane, lipid rafts and caveolae. Phosphorylation on both Tyr-19 and Tyr-27 is required for insulin-induced 'Ser-727' phosphorylation of STAT3 and its activation. Phosphorylation on Tyr-19 is required for insulin-induced phosphorylation of MAPK1 and DNA binding of STAT3. Tyrosine phosphorylation is induced by both EGF and insulin.

The protein resides in the nucleus. The protein localises to the cytoplasm. Its subcellular location is the golgi apparatus membrane. It is found in the cell membrane. It localises to the membrane. The protein resides in the caveola. Its function is as follows. May act as a scaffolding protein within caveolar membranes. Interacts directly with G-protein alpha subunits and can functionally regulate their activity. Acts as an accessory protein in conjunction with CAV1 in targeting to lipid rafts and driving caveolae formation. Positive regulator of cellular mitogenesis of the MAPK signaling pathway. Required for the insulin-stimulated nuclear translocation and activation of MAPK1 and STAT3, and the subsequent regulation of cell cycle progression. This chain is Caveolin-2 (CAV2), found in Muntiacus muntjak (Barking deer).